A 435-amino-acid polypeptide reads, in one-letter code: MFFKLLKDAFKIKQVRSKILFTIFIILVFRIGTTITVPGINAKALSNLNDLPFLNMLSLVSGNAMRNFSVFALGVSPYITASIVVQLLQMDLLPKFVEWGKQGEVGRRKLNQATRYIALVLAFVQAIGITAGFDTLSRANLVANPNVQTYALICVLLATGSMIVTWLGEQITDKGYGNGVSMIIFAGIVSAIPDMIKGIYEDYFVNIPSERLTSSFIFVGILIVAVLLIIYFTTFVQQAEYKIPIQYTKVAKGAPSSSYLPLKVNPAGVIPVIFASSITAAPAAIFQVVSALGYDADWVKTAQSLLATTTISGMFMYAFLIVLFTFFYTFVQINPEKTAENLQKSGAYIPGVRPGKGTEDYMSKLLRRLATVGSLFLGFISILPILAKDVFGLTDAVALGGTSLLIIISTGIEGMKQLEGYLLKRKYVGFMDTSE.

Transmembrane regions (helical) follow at residues 19-39 (ILFT…TVPG), 68-88 (FSVF…VQLL), 116-136 (YIAL…FDTL), 147-167 (VQTY…VTWL), 179-199 (GVSM…IKGI), 216-236 (FIFV…TTFV), 269-289 (VIPV…FQVV), 311-331 (ISGM…YTFV), 372-392 (VGSL…DVFG), and 395-415 (DAVA…IEGM).

It belongs to the SecY/SEC61-alpha family. As to quaternary structure, component of the Sec protein translocase complex. Heterotrimer consisting of SecY, SecE and SecG subunits. The heterotrimers can form oligomers, although 1 heterotrimer is thought to be able to translocate proteins. Interacts with the ribosome. Interacts with SecDF, and other proteins may be involved. Interacts with SecA.

It localises to the cell membrane. The central subunit of the protein translocation channel SecYEG. Consists of two halves formed by TMs 1-5 and 6-10. These two domains form a lateral gate at the front which open onto the bilayer between TMs 2 and 7, and are clamped together by SecE at the back. The channel is closed by both a pore ring composed of hydrophobic SecY resides and a short helix (helix 2A) on the extracellular side of the membrane which forms a plug. The plug probably moves laterally to allow the channel to open. The ring and the pore may move independently. This chain is Protein translocase subunit SecY, found in Streptococcus sanguinis (strain SK36).